The chain runs to 85 residues: MSKVKIELFTSPMCPHCPAAKRVVEEVANEMPDAVEVEYINVMENPQKAMEYGIMAVPTIVINGDVEFIGAPTKEALVEAIKKRL.

Residues 1–85 enclose the Glutaredoxin domain; the sequence is MSKVKIELFT…ALVEAIKKRL (85 aa). An intrachain disulfide couples C14 to C17.

Belongs to the glutaredoxin family.

It localises to the cytoplasm. Functionally, acts to maintain redox homeostasis; functions as a protein disulfide reductase. The chain is Thioredoxin (trx) from Methanocaldococcus jannaschii (strain ATCC 43067 / DSM 2661 / JAL-1 / JCM 10045 / NBRC 100440) (Methanococcus jannaschii).